Here is a 734-residue protein sequence, read N- to C-terminus: Photosystem I P700 chlorophyll a apoprotein A2 (734 aa).

A run of 8 helical transmembrane segments spans residues 46 to 69 (IFAS…FHVA), 135 to 158 (LYTG…LHLQ), 175 to 199 (LNHH…HVAI), 273 to 291 (IAHH…GHMY), 330 to 353 (IHFQ…QHMY), 369 to 395 (AALY…IFFI), 417 to 439 (AIIS…LYVH), and 517 to 535 (FLVH…LILV). [4Fe-4S] cluster-binding residues include cysteine 559 and cysteine 568. The next 2 membrane-spanning stretches (helical) occupy residues 575-596 (AFYL…YWHW) and 643-665 (LSVW…MFLI). Positions 654, 662, and 670 each coordinate chlorophyll a. A phylloquinone-binding site is contributed by tryptophan 671. The helical transmembrane segment at 707 to 727 (LVGLAHFSVGYIFTYAAFLIA) threads the bilayer.

It belongs to the PsaA/PsaB family. The PsaA/B heterodimer binds the P700 chlorophyll special pair and subsequent electron acceptors. PSI consists of a core antenna complex that captures photons, and an electron transfer chain that converts photonic excitation into a charge separation. The eukaryotic PSI reaction center is composed of at least 11 subunits. P700 is a chlorophyll a/chlorophyll a' dimer, A0 is one or more chlorophyll a, A1 is one or both phylloquinones and FX is a shared 4Fe-4S iron-sulfur center. serves as cofactor.

It localises to the plastid. The protein resides in the chloroplast thylakoid membrane. The enzyme catalyses reduced [plastocyanin] + hnu + oxidized [2Fe-2S]-[ferredoxin] = oxidized [plastocyanin] + reduced [2Fe-2S]-[ferredoxin]. Its function is as follows. PsaA and PsaB bind P700, the primary electron donor of photosystem I (PSI), as well as the electron acceptors A0, A1 and FX. PSI is a plastocyanin-ferredoxin oxidoreductase, converting photonic excitation into a charge separation, which transfers an electron from the donor P700 chlorophyll pair to the spectroscopically characterized acceptors A0, A1, FX, FA and FB in turn. Oxidized P700 is reduced on the lumenal side of the thylakoid membrane by plastocyanin. This is Photosystem I P700 chlorophyll a apoprotein A2 from Phaseolus vulgaris (Kidney bean).